The following is a 142-amino-acid chain: Protein archease (142 aa).

Residues aspartate 12 and aspartate 141 each coordinate Ca(2+).

This sequence belongs to the archease family.

Its function is as follows. Activates the tRNA-splicing ligase complex by facilitating the enzymatic turnover of catalytic subunit RtcB. Acts by promoting the guanylylation of RtcB, a key intermediate step in tRNA ligation. Can also alter the NTP specificity of RtcB such that ATP, dGTP or ITP is used efficiently. The sequence is that of Protein archease from Thermococcus kodakarensis (strain ATCC BAA-918 / JCM 12380 / KOD1) (Pyrococcus kodakaraensis (strain KOD1)).